Consider the following 82-residue polypeptide: Cortexin-1 (82 aa).

Residues Met-1–Val-20 form a disordered region. The helical transmembrane segment at Thr-30–Val-50 threads the bilayer.

Belongs to the cortexin family.

Its subcellular location is the membrane. Functionally, may mediate extracellular or intracellular signaling of cortical neurons during forebrain development. In Mus musculus (Mouse), this protein is Cortexin-1 (Ctxn1).